The following is a 399-amino-acid chain: Phosphoglycerate kinase (399 aa).

Residues 24-26 (DLN), Arg41, 64-67 (HLGR), Arg123, and Arg160 each bind substrate. Residues Lys210, Gly298, Glu329, and 355–358 (GGDS) contribute to the ATP site.

Belongs to the phosphoglycerate kinase family. As to quaternary structure, monomer.

The protein localises to the cytoplasm. The enzyme catalyses (2R)-3-phosphoglycerate + ATP = (2R)-3-phospho-glyceroyl phosphate + ADP. The protein operates within carbohydrate degradation; glycolysis; pyruvate from D-glyceraldehyde 3-phosphate: step 2/5. The sequence is that of Phosphoglycerate kinase from Salinispora tropica (strain ATCC BAA-916 / DSM 44818 / JCM 13857 / NBRC 105044 / CNB-440).